Reading from the N-terminus, the 281-residue chain is Bis(5'-nucleosyl)-tetraphosphatase, symmetrical (281 aa).

Belongs to the Ap4A hydrolase family.

The enzyme catalyses P(1),P(4)-bis(5'-adenosyl) tetraphosphate + H2O = 2 ADP + 2 H(+). In terms of biological role, hydrolyzes diadenosine 5',5'''-P1,P4-tetraphosphate to yield ADP. This is Bis(5'-nucleosyl)-tetraphosphatase, symmetrical from Pectobacterium carotovorum subsp. carotovorum (strain PC1).